The sequence spans 178 residues: Ribosome maturation factor RimP (178 aa).

This sequence belongs to the RimP family.

The protein resides in the cytoplasm. In terms of biological role, required for maturation of 30S ribosomal subunits. The protein is Ribosome maturation factor RimP of Maricaulis maris (strain MCS10) (Caulobacter maris).